A 598-amino-acid polypeptide reads, in one-letter code: Elongation factor 4 (598 aa).

The tr-type G domain maps to 2 to 184 (NNIRNFAIIA…AIVTKLPAPQ (183 aa)). GTP-binding positions include 14 to 19 (DHGKST) and 131 to 134 (NKVD).

The protein belongs to the TRAFAC class translation factor GTPase superfamily. Classic translation factor GTPase family. LepA subfamily.

The protein localises to the cell membrane. The catalysed reaction is GTP + H2O = GDP + phosphate + H(+). Required for accurate and efficient protein synthesis under certain stress conditions. May act as a fidelity factor of the translation reaction, by catalyzing a one-codon backward translocation of tRNAs on improperly translocated ribosomes. Back-translocation proceeds from a post-translocation (POST) complex to a pre-translocation (PRE) complex, thus giving elongation factor G a second chance to translocate the tRNAs correctly. Binds to ribosomes in a GTP-dependent manner. The polypeptide is Elongation factor 4 (Wolbachia pipientis subsp. Culex pipiens (strain wPip)).